The following is a 585-amino-acid chain: MEVEEEVSRWEGYADWRNRAAVKGRHGGMLAASFVLVVEILENLAYLANASNLVLYLREYMHMSPSKSANDVTNFMGTAFLLALLGGFLSDAFFSTFQIFLISASIEFLGLIILTIQARTPSLMPPSCDSPTCEEVSGSKAAMLFVGLYLVALGVGGIKGSLASHGAEQFDESTPKGRKQRSTFFNYFVFCLACGALVAVTFVVWLEDNKGWEWGFGVSTIAIFVSILIFLSGSRFYRNKIPCGSPLTTILKVLLAASVKCCSSGSSSNAVASMSVSPSNHCVSKGKKEVESQGELEKPRQEEALPPRAQLTNSLKVLNGAADEKPVHRLLECTVQQVEDVKIVLKMLPIFACTIMLNCCLAQLSTFSVQQAASMNTKIGSLKIPPASLPIFPVVFIMILAPIYDHLIIPFARKATKTETGVTHLQRIGVGLVLSILAMAVAALVEIKRKGVAKDSGLLDSKETLPVTFLWIALQYLFLGSADLFTLAGLLEYFFTEAPSSMRSLATSLSWASLAMGYYLSSVIVSIVNSITGSSGNTPWLRGKSINRYKLDYFYWLMCVLSAANFLHYLFWAMRYKYRSTGSRS.

12 helical membrane-spanning segments follow: residues 28 to 48 (GMLA…AYLA), 75 to 95 (FMGT…AFFS), 96 to 116 (TFQI…ILTI), 142 to 162 (AMLF…KGSL), 184 to 204 (FFNY…TFVV), 211 to 231 (GWEW…LIFL), 343 to 363 (IVLK…CLAQ), 391 to 411 (IFPV…IIPF), 428 to 448 (IGVG…VEIK), 465 to 485 (LPVT…ADLF), 508 to 528 (SLSW…VSIV), and 554 to 574 (FYWL…FWAM).

It belongs to the major facilitator superfamily. Proton-dependent oligopeptide transporter (POT/PTR) (TC 2.A.17) family. Expressed in root hairs and in epidermis of both root tips and mature regions of roots. Detected in shoots, stems, flowers, siliques and imbibed seeds. Expressed in vascular tissues in cotyledons, trus leaves, hypocotyls, roots and inflorescence stems.

Its subcellular location is the cell membrane. Its function is as follows. Low-affinity proton-dependent nitrate transporter. Involved in constitutive nitrate uptake. Not involved in histidine or dipeptides transport. Involved in (+)-abscisic acid (ABA) transport, but not in gibberellin, indole-3-acetic acid or jasmonic acid import. Mediates cellular ABA uptake. Nitrate does not compete with abscisic acid as a substrate of NPF4.6. This chain is Protein NRT1/ PTR FAMILY 4.6 (NPF4.6), found in Arabidopsis thaliana (Mouse-ear cress).